A 338-amino-acid chain; its full sequence is O-methyltransferase 4 (338 aa).

S-adenosyl-L-methionine is bound by residues G184, D207, N230, F231, K244, and R245. The active-site Proton acceptor is H248.

It belongs to the class I-like SAM-binding methyltransferase superfamily. Cation-independent O-methyltransferase family. COMT subfamily.

It catalyses the reaction (3,5-dichloro-2,4,6-trihydroxyphenyl)hexan-1-one + S-adenosyl-L-methionine = 1-(3,5-dichloro-2,6-dihydroxy-4-methoxyphenyl)hexan-1-one + S-adenosyl-L-homocysteine + H(+). The protein is O-methyltransferase 4 (omt4) of Dictyostelium discoideum (Social amoeba).